Reading from the N-terminus, the 481-residue chain is CUGBP Elav-like family member 6 (481 aa).

Residues 1-12 are compositionally biased toward low complexity; that stretch reads MAAAPGGSAQPA. A disordered region spans residues 1–34; that stretch reads MAAAPGGSAQPAGPGPRLGFSTADSGVGMSGLNP. RRM domains lie at 46–127, 134–214, and 396–474; these read IKLF…PAAS, RKLF…LADT, and CNLF…LKRP.

This sequence belongs to the CELF/BRUNOL family. As to expression, expressed mainly in kidney, brain and testis and present in other tissues albeit at lower levels. Also expressed in fetal kidney.

Its subcellular location is the nucleus. The protein localises to the cytoplasm. Its function is as follows. RNA-binding protein implicated in the regulation of pre-mRNA alternative splicing. Mediates exon inclusion and/or exclusion in pre-mRNA that are subject to tissue-specific and developmentally regulated alternative splicing. Specifically activates exon 5 inclusion of TNNT2 in a muscle-specific splicing enhancer (MSE)-dependent manner. Promotes also exon exclusion of INSR pre-mRNA. This chain is CUGBP Elav-like family member 6 (CELF6), found in Homo sapiens (Human).